Here is an 822-residue protein sequence, read N- to C-terminus: MPTVISASVAPRTGAEPMSPGPIAQAAQDKGTEAGGGNPSGIYSAIISRNFPIIGVKEKTFEQLHKKCLEKKVLFVDPEFPPDETSLFYSQKFPIQFVWKRPPEICENPRFIVGGANRTDICQGDLGDCWFLAAIACLTLNKRLLFRVIPHDQSFTENYAGIFHFQFWRYGDWVDVVIDDCLPTYNNQLVFTKSNHRNEFWNALLEKAYAKLHGSYEALKGGNTTEAMEDFTGGVTEFFEIKDAPRDMYKIMKKAIERGSLMGCSIDDGTNMTYGTSPSGLKMGELIERMVRNMDNSRLRDSDLIPEGCSDDRPTRMIVPVQFETRMACGLVKGHAYSVTGLEEALYKGEKVKLVRLRNPWGQVEWNGSWSDSWKDWSYVDKDEKARLQHQVTEDGEFWMSYDDFIYHFTKLEICNLTADALESDKLQTWTVSVNEGRWVRGCSAGGCRNFPDTFWTNPQYRLKLLEEDDDPDDSEVICSFLVALMQKNRRKDRKLGANLFTIGFAIYEVPKEMHGNKQHLQKDFFLYNASKARSRTYINMREVSERFRLPPSEYVIVPSTYEPHQEGEFILRVFSEKRNLSEEVENTISVDRPVKKKKNKPIIFVSDRANSNKELGVDQETEEGKDNTSPDKQAKSPQLEPGNTDQESEEQRQFRNIFRQIAGDDMEICADELKNVLNRVVNKHKDLKTQGFTLESCRSMIALMDTDGSGRLNLQEFHHLWKKIKTWQKIFKHYDTDQSGTINSYEMRNAVKDAGFHLNNQLYDIITMRYADKYMNIDFDSFICCFVRLEGMFRAFNAFDKDGDGIIKLNVLEWLQLTMYA.

The disordered stretch occupies residues 1–36 (MPTVISASVAPRTGAEPMSPGPIAQAAQDKGTEAGG). The 345-residue stretch at 74–418 (LFVDPEFPPD…FTKLEICNLT (345 aa)) folds into the Calpain catalytic domain. Residues C129, H335, and N359 contribute to the active site. Positions 419 to 587 (ADALESDKLQ…KRNLSEEVEN (169 aa)) are domain III. Residues 588 to 650 (TISVDRPVKK…EPGNTDQESE (63 aa)) are linker. A disordered region spans residues 604-652 (IFVSDRANSNKELGVDQETEEGKDNTSPDKQAKSPQLEPGNTDQESEEQ). A compositionally biased stretch (basic and acidic residues) spans 623–635 (EEGKDNTSPDKQA). 4 consecutive EF-hand domains span residues 650 to 684 (EEQRQFRNIFRQIAGDDMEICADELKNVLNRVVNK), 693 to 726 (FTLESCRSMIALMDTDGSGRLNLQEFHHLWKKIK), 723 to 758 (KKIKTWQKIFKHYDTDQSGTINSYEMRNAVKDAGFH), and 788 to 822 (VRLEGMFRAFNAFDKDGDGIIKLNVLEWLQLTMYA). Residues 651 to 822 (EQRQFRNIFR…LEWLQLTMYA (172 aa)) form a domain IV region. Ca(2+) is bound by residues A663, D666, E668, E673, D706, D708, S710, R712, E717, D736, D738, S740, T742, E747, D801, D803, D805, and I807.

This sequence belongs to the peptidase C2 family. As to quaternary structure, homodimer; via EF-hand domain 4. Interacts with TTN/titin. Interacts with CMYA5; this interaction, which results in CMYA5 proteolysis, may protect CAPN3 from autolysis. Interacts with SIMC1. Interacts with UTP25; the interaction is required for CAPN3 translocation to the nucleolus. Skeletal muscle.

The protein localises to the cytoplasm. It is found in the nucleus. It localises to the nucleolus. The enzyme catalyses Broad endopeptidase activity.. Activated by micromolar concentrations of calcium and inhibited by calpastatin. Its function is as follows. Calcium-regulated non-lysosomal thiol-protease. Proteolytically cleaves CTBP1. Mediates, with UTP25, the proteasome-independent degradation of p53/TP53. The chain is Calpain-3 (CAPN3) from Bos taurus (Bovine).